We begin with the raw amino-acid sequence, 154 residues long: Ribosome maturation factor RimP (154 aa).

The protein belongs to the RimP family.

It localises to the cytoplasm. In terms of biological role, required for maturation of 30S ribosomal subunits. This is Ribosome maturation factor RimP from Cyanothece sp. (strain PCC 7425 / ATCC 29141).